A 129-amino-acid polypeptide reads, in one-letter code: Small ribosomal subunit protein uS9 (129 aa).

The tract at residues 110–129 is disordered; the sequence is VERKKYGKKKARKSFQFSKR. The segment covering 114–129 has biased composition (basic residues); sequence KYGKKKARKSFQFSKR.

This sequence belongs to the universal ribosomal protein uS9 family.

The sequence is that of Small ribosomal subunit protein uS9 from Chlorobaculum parvum (strain DSM 263 / NCIMB 8327) (Chlorobium vibrioforme subsp. thiosulfatophilum).